Here is a 560-residue protein sequence, read N- to C-terminus: Muellerian-inhibiting factor (560 aa).

A signal peptide spans 1–24 (MRDLPLTSLALVLSALGALLGTEA). Residues 25-451 (LRAEEPAVGT…DPRGPGRAQR (427 aa)) constitute a propeptide that is removed on maturation. N64 carries an N-linked (GlcNAc...) asparagine glycan. The interval 259 to 287 (PLPAHGQLDTVPFPPPRPSAELEESPPSA) is disordered. N329 carries an N-linked (GlcNAc...) asparagine glycan. Cystine bridges form between C462–C526, C488–C557, and C492–C559.

The protein belongs to the TGF-beta family. Homodimer; disulfide-linked. In terms of processing, preproprotein is proteolytically processed to generate N- and C-terminal cleavage products that homodimerize and associate to form a biologically active non-covalent complex. Binding of the non-covalent complex to AMHR2 induces dissociation of the pro-region from the mature C-terminal dimer. The N-terminal portion of the protein, despite having no intrinsic activity, has the role of amplifying the activity of the C-terminus. As to expression, in ovaries, AMH is detected in granulosa cells of early growing follicles.

It localises to the secreted. In terms of biological role, plays an important role in several reproductive functions. Induces Muellerian duct regression during male fetal sexual differentiation. Also plays a role in Leydig cell differentiation and function. In female acts as a negative regulator of the primordial to primary follicle transition and decreases FSH sensitivity of growing follicles. AMH signals by binding to a specific type-II receptor, AMHR2, that heterodimerizes with type-I receptors (ACVR1 and BMPR1A), and recruiting SMAD proteins that are translocated to the nucleus to regulate target gene expression. This is Muellerian-inhibiting factor from Homo sapiens (Human).